We begin with the raw amino-acid sequence, 205 residues long: Glycerol-3-phosphate acyltransferase (205 aa).

4 consecutive transmembrane segments (helical) span residues 4–24, 80–100, 112–132, and 138–158; these read IAPG…AILV, PFWL…PIFF, FGAI…TWLL, and GYSS…VWWF.

It belongs to the PlsY family. In terms of assembly, probably interacts with PlsX.

Its subcellular location is the cell inner membrane. The enzyme catalyses an acyl phosphate + sn-glycerol 3-phosphate = a 1-acyl-sn-glycero-3-phosphate + phosphate. Its pathway is lipid metabolism; phospholipid metabolism. In terms of biological role, catalyzes the transfer of an acyl group from acyl-phosphate (acyl-PO(4)) to glycerol-3-phosphate (G3P) to form lysophosphatidic acid (LPA). This enzyme utilizes acyl-phosphate as fatty acyl donor, but not acyl-CoA or acyl-ACP. This chain is Glycerol-3-phosphate acyltransferase, found in Cronobacter sakazakii (strain ATCC BAA-894) (Enterobacter sakazakii).